Consider the following 413-residue polypeptide: Tyrosine--tRNA ligase (413 aa).

Tyr-34 lines the L-tyrosine pocket. A 'HIGH' region motif is present at residues 39–48; that stretch reads PTSHSLTVGH. L-tyrosine contacts are provided by Tyr-164 and Gln-168. The 'KMSKS' region signature appears at 225 to 229; sequence KFGKS. Lys-228 contacts ATP. Residues 347 to 413 form the S4 RNA-binding domain; the sequence is ILLVDALVQT…GKKNNALIVF (67 aa).

Belongs to the class-I aminoacyl-tRNA synthetase family. TyrS type 1 subfamily. As to quaternary structure, homodimer.

It localises to the cytoplasm. The enzyme catalyses tRNA(Tyr) + L-tyrosine + ATP = L-tyrosyl-tRNA(Tyr) + AMP + diphosphate + H(+). In terms of biological role, catalyzes the attachment of tyrosine to tRNA(Tyr) in a two-step reaction: tyrosine is first activated by ATP to form Tyr-AMP and then transferred to the acceptor end of tRNA(Tyr). This is Tyrosine--tRNA ligase from Onion yellows phytoplasma (strain OY-M).